The primary structure comprises 183 residues: NADH-quinone oxidoreductase subunit B 2 (183 aa).

The [4Fe-4S] cluster site is built by C47, C48, C113, and C142.

Belongs to the complex I 20 kDa subunit family. As to quaternary structure, NDH-1 is composed of 14 different subunits. Subunits NuoB, C, D, E, F, and G constitute the peripheral sector of the complex. It depends on [4Fe-4S] cluster as a cofactor.

The protein localises to the cell inner membrane. It catalyses the reaction a quinone + NADH + 5 H(+)(in) = a quinol + NAD(+) + 4 H(+)(out). Its function is as follows. NDH-1 shuttles electrons from NADH, via FMN and iron-sulfur (Fe-S) centers, to quinones in the respiratory chain. The immediate electron acceptor for the enzyme in this species is believed to be ubiquinone. Couples the redox reaction to proton translocation (for every two electrons transferred, four hydrogen ions are translocated across the cytoplasmic membrane), and thus conserves the redox energy in a proton gradient. The protein is NADH-quinone oxidoreductase subunit B 2 of Anaeromyxobacter sp. (strain Fw109-5).